The chain runs to 547 residues: Chaperonin GroEL (547 aa).

ATP-binding positions include 30–33 (TLGP), K51, 87–91 (DGTTT), G415, 479–481 (NAA), and D495.

The protein belongs to the chaperonin (HSP60) family. As to quaternary structure, forms a cylinder of 14 subunits composed of two heptameric rings stacked back-to-back. Interacts with the co-chaperonin GroES.

It is found in the cytoplasm. It carries out the reaction ATP + H2O + a folded polypeptide = ADP + phosphate + an unfolded polypeptide.. In terms of biological role, together with its co-chaperonin GroES, plays an essential role in assisting protein folding. The GroEL-GroES system forms a nano-cage that allows encapsulation of the non-native substrate proteins and provides a physical environment optimized to promote and accelerate protein folding. This Pseudomonas syringae pv. syringae (strain B728a) protein is Chaperonin GroEL.